A 784-amino-acid polypeptide reads, in one-letter code: Transcription factor kayak (784 aa).

3 stretches are compositionally biased toward low complexity: residues 97 to 106 (QPTQSAYQQQ), 115 to 126 (NNNNNSNNNANM), and 198 to 227 (QQQQ…QQQQ). Disordered regions lie at residues 97-126 (QPTQ…NANM), 196-231 (YNQQ…HLPT), 358-404 (PGSD…GNGS), and 421-464 (SGRG…KRRI). Positions 365–378 (SNGSWNEGQLNDDQ) are enriched in polar residues. A compositionally biased stretch (low complexity) spans 380-397 (TTDTSSAATDSTSYQNGG). A compositionally biased stretch (polar residues) spans 421-438 (SGRGSGLAANSTTSNSAT). The bZIP domain occupies 459-522 (EEKRRIRRER…SQLEYVLQTH (64 aa)). The tract at residues 461-463 (KRR) is basic motif. The tract at residues 464–471 (IRRERNKL) is leucine-zipper. Serine 594 carries the phosphoserine modification. Disordered stretches follow at residues 616–635 (QDGA…TPAK) and 759–784 (PTCS…LVSL).

The protein belongs to the bZIP family. Fos subfamily. In terms of assembly, homodimer. Heterodimer with Jra. The kay-Jra heterodimer binds more stably to the AP-1 site than either of the two proteins alone.

The protein resides in the nucleus. Its function is as follows. Developmentally regulated transcription factor AP-1 binds and recognizes the enhancer DNA sequence: 5'-TGA[CG]TCA-3'. May play a role in the function or determination of a particular subset of cells in the developing embryo. It is able to carry out its function either independently of or in conjunction with Jra. This Drosophila mojavensis (Fruit fly) protein is Transcription factor kayak.